We begin with the raw amino-acid sequence, 886 residues long: Regulatory protein LEU3 (886 aa).

Positions 1–28 (MEGRSDFVATSQSGSEMSHSETRNRTGM) are disordered. Residues 8–17 (VATSQSGSEM) are compositionally biased toward polar residues. A DNA-binding region (zn(2)-C6 fungal-type) is located at residues 37–67 (CVECRQQKSKCDAHERAPEPCTKCAKKNVPC). Disordered regions lie at residues 673 to 709 (TAYNVDEEEEEDEDEEGEEEEEEEELSSKVPENMDSQ) and 734 to 756 (PLDPNPINAGSTSSGSSLTTPNS). Residues 677 to 697 (VDEEEEEDEDEEGEEEEEEEE) show a composition bias toward acidic residues. The segment covering 743-753 (GSTSSGSSLTT) has biased composition (low complexity). Residues 874-882 (DILMNEFAF) carry the 9aaTAD motif.

The protein localises to the nucleus. Factor for control of RNA levels of a group of leucine-specific genes. The protein is Regulatory protein LEU3 (LEU3) of Saccharomyces cerevisiae (strain ATCC 204508 / S288c) (Baker's yeast).